A 146-amino-acid polypeptide reads, in one-letter code: uncharacterized protein (146 aa).

The tract at residues 87–121 (SRSHHSTAKSAKSALSSDSGDGSDPDPEPETFPSA) is disordered. Positions 94–106 (AKSAKSALSSDSG) are enriched in low complexity.

This is an uncharacterized protein from Escherichia coli (strain K12).